A 155-amino-acid chain; its full sequence is Fibroblast growth factor 1 (155 aa).

An N-acetylalanine modification is found at Ala2. The short motif at 24 to 27 (KKPK) is the Nuclear localization signal element. Heparin-binding positions include 24-28 (KKPKL) and 113-116 (ISKK).

Belongs to the heparin-binding growth factors family. In terms of assembly, monomer. Homodimer. Interacts with FGFR1, FGFR2, FGFR3 and FGFR4. Affinity between fibroblast growth factors (FGFs) and their receptors is increased by heparan sulfate glycosaminoglycans that function as coreceptors. Found in a complex with FGFBP1, FGF1 and FGF2. Interacts with FGFBP1. Part of a Cu(2+)-dependent multiprotein aggregate containing FGF1, S100A13 and SYT1. Interacts with S100A13. Interacts with FGFBP1. Interacts with LRRC59. Interacts with CSNKA, CSNKB and FIBP. While binding with LRRC59, CSNKA and FIBP seem mutually exclusive, CSNKB and FIBP may cooperatively interact with FGF1. Interacts with SYT1. Forms a ternary complex with FGFR1 and ITGAV:ITGB3 and induces the recruitment of PTPN11 to the complex. Post-translationally, in the nucleus, phosphorylated by PKC/PRKCD.

It is found in the secreted. Its subcellular location is the cytoplasm. The protein resides in the cell cortex. It localises to the cytosol. The protein localises to the nucleus. Plays an important role in the regulation of cell survival, cell division, angiogenesis, cell differentiation and cell migration. Functions as a potent mitogen in vitro. Acts as a ligand for FGFR1 and integrins. Binds to FGFR1 in the presence of heparin leading to FGFR1 dimerization and activation via sequential autophosphorylation on tyrosine residues which act as docking sites for interacting proteins, leading to the activation of several signaling cascades. Binds to integrin ITGAV:ITGB3. Its binding to integrin, subsequent ternary complex formation with integrin and FGFR1, and the recruitment of PTPN11 to the complex are essential for FGF1 signaling. Induces the phosphorylation and activation of FGFR1, FRS2, MAPK3/ERK1, MAPK1/ERK2 and AKT1. Can induce angiogenesis. In Bos taurus (Bovine), this protein is Fibroblast growth factor 1 (FGF1).